Here is a 152-residue protein sequence, read N- to C-terminus: Endoribonuclease YbeY (152 aa).

Positions 114, 118, and 124 each coordinate Zn(2+).

Belongs to the endoribonuclease YbeY family. Zn(2+) is required as a cofactor.

It is found in the cytoplasm. Single strand-specific metallo-endoribonuclease involved in late-stage 70S ribosome quality control and in maturation of the 3' terminus of the 16S rRNA. This is Endoribonuclease YbeY from Coxiella burnetii (strain CbuK_Q154) (Coxiella burnetii (strain Q154)).